The chain runs to 106 residues: UPF0235 protein OCAR_4310/OCA5_c02140 (106 aa).

This sequence belongs to the UPF0235 family.

In Afipia carboxidovorans (strain ATCC 49405 / DSM 1227 / KCTC 32145 / OM5) (Oligotropha carboxidovorans), this protein is UPF0235 protein OCAR_4310/OCA5_c02140.